The sequence spans 62 residues: Large ribosomal subunit protein uL29 (62 aa).

It belongs to the universal ribosomal protein uL29 family.

The sequence is that of Large ribosomal subunit protein uL29 from Vesicomyosocius okutanii subsp. Calyptogena okutanii (strain HA).